A 202-amino-acid polypeptide reads, in one-letter code: Imidazoleglycerol-phosphate dehydratase (202 aa).

This sequence belongs to the imidazoleglycerol-phosphate dehydratase family.

The protein resides in the cytoplasm. It catalyses the reaction D-erythro-1-(imidazol-4-yl)glycerol 3-phosphate = 3-(imidazol-4-yl)-2-oxopropyl phosphate + H2O. Its pathway is amino-acid biosynthesis; L-histidine biosynthesis; L-histidine from 5-phospho-alpha-D-ribose 1-diphosphate: step 6/9. In Synechococcus sp. (strain WH7803), this protein is Imidazoleglycerol-phosphate dehydratase.